Consider the following 260-residue polypeptide: NH(3)-dependent NAD(+) synthetase (260 aa).

31 to 38 (GLSGGLDS) contacts ATP. A Mg(2+)-binding site is contributed by Asp-37. Arg-112 contacts deamido-NAD(+). Thr-132 lines the ATP pocket. Glu-137 provides a ligand contact to Mg(2+). ATP-binding residues include Lys-161 and Ser-183.

Belongs to the NAD synthetase family. As to quaternary structure, homodimer.

It catalyses the reaction deamido-NAD(+) + NH4(+) + ATP = AMP + diphosphate + NAD(+) + H(+). It functions in the pathway cofactor biosynthesis; NAD(+) biosynthesis; NAD(+) from deamido-NAD(+) (ammonia route): step 1/1. Its function is as follows. Catalyzes the ATP-dependent amidation of deamido-NAD to form NAD. Uses ammonia as a nitrogen source. The chain is NH(3)-dependent NAD(+) synthetase from Helicobacter pylori (strain ATCC 700392 / 26695) (Campylobacter pylori).